We begin with the raw amino-acid sequence, 89 residues long: Small ribosomal subunit protein uS15 (89 aa).

The protein belongs to the universal ribosomal protein uS15 family. As to quaternary structure, part of the 30S ribosomal subunit. Forms a bridge to the 50S subunit in the 70S ribosome, contacting the 23S rRNA.

In terms of biological role, one of the primary rRNA binding proteins, it binds directly to 16S rRNA where it helps nucleate assembly of the platform of the 30S subunit by binding and bridging several RNA helices of the 16S rRNA. Functionally, forms an intersubunit bridge (bridge B4) with the 23S rRNA of the 50S subunit in the ribosome. The polypeptide is Small ribosomal subunit protein uS15 (Methylorubrum extorquens (strain CM4 / NCIMB 13688) (Methylobacterium extorquens)).